An 89-amino-acid chain; its full sequence is Small ribosomal subunit protein bS20 (89 aa).

The protein belongs to the bacterial ribosomal protein bS20 family.

In terms of biological role, binds directly to 16S ribosomal RNA. This is Small ribosomal subunit protein bS20 from Hahella chejuensis (strain KCTC 2396).